We begin with the raw amino-acid sequence, 119 residues long: Hydrogenase maturation factor HypA (119 aa).

H2 is a Ni(2+) binding site. C73, C76, C89, and C92 together coordinate Zn(2+).

The protein belongs to the HypA/HybF family.

Functionally, involved in the maturation of [NiFe] hydrogenases. Required for nickel insertion into the metal center of the hydrogenase. The sequence is that of Hydrogenase maturation factor HypA from Cupriavidus necator (strain ATCC 17699 / DSM 428 / KCTC 22496 / NCIMB 10442 / H16 / Stanier 337) (Ralstonia eutropha).